The chain runs to 294 residues: 4-hydroxy-tetrahydrodipicolinate synthase (294 aa).

Threonine 46 contributes to the pyruvate binding site. Tyrosine 135 (proton donor/acceptor) is an active-site residue. The active-site Schiff-base intermediate with substrate is the lysine 164. Isoleucine 205 contacts pyruvate.

The protein belongs to the DapA family. Homotetramer; dimer of dimers.

It is found in the cytoplasm. It catalyses the reaction L-aspartate 4-semialdehyde + pyruvate = (2S,4S)-4-hydroxy-2,3,4,5-tetrahydrodipicolinate + H2O + H(+). The protein operates within amino-acid biosynthesis; L-lysine biosynthesis via DAP pathway; (S)-tetrahydrodipicolinate from L-aspartate: step 3/4. Catalyzes the condensation of (S)-aspartate-beta-semialdehyde [(S)-ASA] and pyruvate to 4-hydroxy-tetrahydrodipicolinate (HTPA). The chain is 4-hydroxy-tetrahydrodipicolinate synthase from Nitratiruptor sp. (strain SB155-2).